A 474-amino-acid polypeptide reads, in one-letter code: tRNA modification GTPase MnmE (474 aa).

Residues Arg-28, Glu-92, and Arg-131 each contribute to the (6S)-5-formyl-5,6,7,8-tetrahydrofolate site. Residues 227–395 (GIPVAIVGTT…LKGELTQIME (169 aa)) enclose the TrmE-type G domain. Residue Asn-237 coordinates K(+). Residues 237-242 (NVGKST), 256-262 (SDIHGTT), 281-284 (DTAG), and 376-378 (SAR) each bind GTP. A Mg(2+)-binding site is contributed by Ser-241. K(+) contacts are provided by Ser-256, Ile-258, and Thr-261. Thr-262 provides a ligand contact to Mg(2+). Lys-474 provides a ligand contact to (6S)-5-formyl-5,6,7,8-tetrahydrofolate.

The protein belongs to the TRAFAC class TrmE-Era-EngA-EngB-Septin-like GTPase superfamily. TrmE GTPase family. As to quaternary structure, homodimer. Heterotetramer of two MnmE and two MnmG subunits. K(+) serves as cofactor.

It is found in the cytoplasm. Exhibits a very high intrinsic GTPase hydrolysis rate. Involved in the addition of a carboxymethylaminomethyl (cmnm) group at the wobble position (U34) of certain tRNAs, forming tRNA-cmnm(5)s(2)U34. The sequence is that of tRNA modification GTPase MnmE from Porphyromonas gingivalis (strain ATCC BAA-308 / W83).